The primary structure comprises 153 residues: uncharacterized protein (153 aa).

Disordered stretches follow at residues 30-66 (GPTV…RKGD) and 79-153 (IKEN…DYDD). Acidic residues predominate over residues 45–56 (EDSDGSDKEDEQ). Composition is skewed to polar residues over residues 106 to 116 (GDTTSGVNACS) and 130 to 144 (GTKS…SSLL).

This is an uncharacterized protein from Xenopus laevis (African clawed frog).